A 492-amino-acid polypeptide reads, in one-letter code: Nuclear autoantigenic sperm protein homolog (492 aa).

The span at 1 to 14 (MSAEAEAIVTTATA) shows a compositional bias: low complexity. Disordered regions lie at residues 1-52 (MSAE…EQER) and 123-254 (DVPD…EEGV). A phosphothreonine mark is found at T32 and T33. The segment covering 124-145 (VPDEAADDDDEDVDDDEEESAE) has biased composition (acidic residues). Basic and acidic residues-rich tracts occupy residues 147–159 (GAAK…DTKE) and 170–179 (KELDTIKEGS). Residues S179 and S184 each carry the phosphoserine modification. A Phosphothreonine modification is found at T185. Position 193 is a phosphoserine (S193). Polar residues predominate over residues 226–238 (STSNGEVTASCSN). The span at 244–253 (VEEEPEEEEG) shows a compositional bias: acidic residues. TPR repeat units lie at residues 284–317 (AEVQ…HGEL) and 326–359 (AELH…IEEE). Positions 377–400 (MLDLEETKQEILAKIQEIEEMQAQ) form a coiled coil. Residues 418 to 459 (SGDAAAASSSSSSSANGAASSSSSSSKGAAAASSSTISSSSA) are compositionally biased toward low complexity. The tract at residues 418–492 (SGDAAAASSS…LCSPAKRAAV (75 aa)) is disordered. Phosphoserine is present on residues S478 and S485.

Belongs to the NASP family. As to quaternary structure, interacts with the histone H3-H4 heterodimer; the interaction with H4 is probably indirect and mediated by H3 (His3, His3.3A and His3.3B). Interacts with His2Av; this interaction directly or indirectly destabilizes His2Av.

The protein localises to the cytoplasm. The protein resides in the nucleus. It is found in the perinuclear region. Functionally, component of the histone chaperone network. Binds and stabilizes histone H3-H4 not bound to chromatin to maintain a soluble reservoir and modulate degradation by chaperone-mediated autophagy. May also bind and stabilize monomeric H3. Maternal effect gene essential for early embryogenesis. The protein is Nuclear autoantigenic sperm protein homolog of Drosophila melanogaster (Fruit fly).